The primary structure comprises 286 residues: Phosphatidylserine decarboxylase proenzyme (286 aa).

Residues aspartate 90, histidine 147, and serine 250 each act as charge relay system; for autoendoproteolytic cleavage activity in the active site. The active-site Schiff-base intermediate with substrate; via pyruvic acid; for decarboxylase activity is the serine 250. Position 250 is a pyruvic acid (Ser); by autocatalysis (serine 250).

Belongs to the phosphatidylserine decarboxylase family. PSD-B subfamily. Prokaryotic type I sub-subfamily. In terms of assembly, heterodimer of a large membrane-associated beta subunit and a small pyruvoyl-containing alpha subunit. Pyruvate serves as cofactor. Is synthesized initially as an inactive proenzyme. Formation of the active enzyme involves a self-maturation process in which the active site pyruvoyl group is generated from an internal serine residue via an autocatalytic post-translational modification. Two non-identical subunits are generated from the proenzyme in this reaction, and the pyruvate is formed at the N-terminus of the alpha chain, which is derived from the carboxyl end of the proenzyme. The autoendoproteolytic cleavage occurs by a canonical serine protease mechanism, in which the side chain hydroxyl group of the serine supplies its oxygen atom to form the C-terminus of the beta chain, while the remainder of the serine residue undergoes an oxidative deamination to produce ammonia and the pyruvoyl prosthetic group on the alpha chain. During this reaction, the Ser that is part of the protease active site of the proenzyme becomes the pyruvoyl prosthetic group, which constitutes an essential element of the active site of the mature decarboxylase.

The protein resides in the cell membrane. The enzyme catalyses a 1,2-diacyl-sn-glycero-3-phospho-L-serine + H(+) = a 1,2-diacyl-sn-glycero-3-phosphoethanolamine + CO2. The protein operates within phospholipid metabolism; phosphatidylethanolamine biosynthesis; phosphatidylethanolamine from CDP-diacylglycerol: step 2/2. In terms of biological role, catalyzes the formation of phosphatidylethanolamine (PtdEtn) from phosphatidylserine (PtdSer). This chain is Phosphatidylserine decarboxylase proenzyme, found in Psychromonas ingrahamii (strain DSM 17664 / CCUG 51855 / 37).